A 320-amino-acid chain; its full sequence is GDSL esterase/lipase At3g43570 (320 aa).

A signal peptide spans 1 to 19 (MKIQIIWLTLVLIVVEANA). The N-linked (GlcNAc...) asparagine glycan is linked to N25. Catalysis depends on S37, which acts as the Nucleophile. N-linked (GlcNAc...) asparagine glycosylation occurs at N287. Active-site residues include D295 and H298.

The protein belongs to the 'GDSL' lipolytic enzyme family.

Its subcellular location is the secreted. The sequence is that of GDSL esterase/lipase At3g43570 from Arabidopsis thaliana (Mouse-ear cress).